We begin with the raw amino-acid sequence, 393 residues long: Formate-dependent phosphoribosylglycinamide formyltransferase (393 aa).

Residues 22 to 23 (EL) and Glu-82 contribute to the N(1)-(5-phospho-beta-D-ribosyl)glycinamide site. Residues Arg-114, Lys-155, 160-165 (SSGKGQ), 195-198 (EGLV), and Glu-203 contribute to the ATP site. The 190-residue stretch at 119–308 (LLAAETLQLP…EFALHVRAFL (190 aa)) folds into the ATP-grasp domain. Residues Glu-267 and Glu-279 each coordinate Mg(2+). N(1)-(5-phospho-beta-D-ribosyl)glycinamide is bound by residues Asp-286, Lys-355, and 362 to 363 (RR).

It belongs to the PurK/PurT family. As to quaternary structure, homodimer.

The enzyme catalyses N(1)-(5-phospho-beta-D-ribosyl)glycinamide + formate + ATP = N(2)-formyl-N(1)-(5-phospho-beta-D-ribosyl)glycinamide + ADP + phosphate + H(+). Its pathway is purine metabolism; IMP biosynthesis via de novo pathway; N(2)-formyl-N(1)-(5-phospho-D-ribosyl)glycinamide from N(1)-(5-phospho-D-ribosyl)glycinamide (formate route): step 1/1. In terms of biological role, involved in the de novo purine biosynthesis. Catalyzes the transfer of formate to 5-phospho-ribosyl-glycinamide (GAR), producing 5-phospho-ribosyl-N-formylglycinamide (FGAR). Formate is provided by PurU via hydrolysis of 10-formyl-tetrahydrofolate. The sequence is that of Formate-dependent phosphoribosylglycinamide formyltransferase from Yersinia enterocolitica serotype O:8 / biotype 1B (strain NCTC 13174 / 8081).